Here is a 512-residue protein sequence, read N- to C-terminus: Cytochrome P450 84A4 (512 aa).

A helical membrane pass occupies residues 7 to 24; that stretch reads LIVLVPLLLFLFPHLLLR. Cys-447 provides a ligand contact to heme.

It belongs to the cytochrome P450 family. It depends on heme as a cofactor. Expressed in seedlings, roots, stems and inflorescence nodes. Low or no expression in leaves, flowers, seeds and lignifying tissue.

Its subcellular location is the membrane. Its function is as follows. Cytochrome P450 involved in the production of catechol-substituted substrates needed for the arabidopyrones biosynthesis. Converts p-coumaraldehyde into caffealdehyde. The protein is Cytochrome P450 84A4 (CYP84A4) of Arabidopsis thaliana (Mouse-ear cress).